The chain runs to 294 residues: Probable 2-(5''-triphosphoribosyl)-3'-dephosphocoenzyme-A synthase (294 aa).

The protein belongs to the CitG/MdcB family.

It catalyses the reaction 3'-dephospho-CoA + ATP = 2'-(5''-triphospho-alpha-D-ribosyl)-3'-dephospho-CoA + adenine. The protein is Probable 2-(5''-triphosphoribosyl)-3'-dephosphocoenzyme-A synthase of Streptococcus pyogenes serotype M2 (strain MGAS10270).